Consider the following 240-residue polypeptide: MGTQLSPAEVREFQETVGVEIAPDILTRALTHRSYAYENGGLPTNERLEFLGDSVLGLVVTDTLYRTHPDLSEGQLAKLRAAVVNMRALADVARELGIGRYVRLGRGEEATGGRDKSSILADTLEALIGAVYLDRGLDEASELVHRLFDPLIARASGLGAGLDWKTSLQELTAAELLGVPEYVVEESGPDHQKTFRATVRVAGQTYGSGEGRSKKEAEQQAAESAWKAIRAATEKAKQES.

The RNase III domain maps to 10-136 (VREFQETVGV…LIGAVYLDRG (127 aa)). E49 serves as a coordination point for Mg(2+). D53 is an active-site residue. Mg(2+) is bound by residues D122 and E125. Residue E125 is part of the active site. Residues 163–231 (DWKTSLQELT…AESAWKAIRA (69 aa)) form the DRBM domain. A disordered region spans residues 205–240 (TYGSGEGRSKKEAEQQAAESAWKAIRAATEKAKQES). Positions 219 to 228 (QQAAESAWKA) are enriched in low complexity.

The protein belongs to the ribonuclease III family. Homodimer. The cofactor is Mg(2+).

The protein resides in the cytoplasm. It carries out the reaction Endonucleolytic cleavage to 5'-phosphomonoester.. In terms of biological role, digests double-stranded RNA. Involved in the processing of primary rRNA transcript to yield the immediate precursors to the large and small rRNAs (23S and 16S). Processes some mRNAs, and tRNAs when they are encoded in the rRNA operon. Processes pre-crRNA and tracrRNA of type II CRISPR loci if present in the organism. In Thermobifida fusca (strain YX), this protein is Ribonuclease 3.